Consider the following 917-residue polypeptide: Hexokinase-2 (917 aa).

Met-1 carries the N-acetylmethionine modification. Positions 1–16 are mitochondrial-binding peptide (MBP); sequence MIASHLLAYFFTELNH. 2 Hexokinase domains span residues 16–458 and 464–906; these read HDQV…MVTA and AYQH…LITA. Residues Arg-30 and 84 to 89 each bind ATP; that span reads DLGGTN. The interval 73-207 is hexokinase small subdomain 1; sequence DGTEHGEFLA…DFDIDIVAMV (135 aa). A D-glucose 6-phosphate-binding site is contributed by 84 to 88; it reads DLGGT. D-glucose contacts are provided by residues 155 to 156, 172 to 173, 208 to 209, Asn-235, Glu-260, and 291 to 294; these read SF, TK, ND, and QLFE. The hexokinase large subdomain 1 stretch occupies residues 208-447; sequence NDTVATMMTC…CDIRFLCSED (240 aa). Asp-209 is a D-glucose 6-phosphate binding site. Position 413–415 (413–415) interacts with D-glucose 6-phosphate; the sequence is DGS. Residue 425–426 coordinates ATP; it reads KR. D-glucose 6-phosphate is bound by residues Ser-449 and 532-536; that span reads DLGGT. Positions 521–655 are hexokinase small subdomain 2; that stretch reads DGTEKGDFLA…EFDLDVVAVV (135 aa). An ATP-binding site is contributed by 532 to 537; the sequence is DLGGTN. D-glucose is bound by residues 603–604, 620–621, and 656–657; these read SF, TK, and ND. Positions 656–895 are hexokinase large subdomain 2; the sequence is NDTVGTMMTC…CDVSFLESED (240 aa). The D-glucose 6-phosphate site is built by Asp-657 and Thr-680. Thr-680 is an ATP binding site. D-glucose contacts are provided by residues 682–683, Glu-708, and 739–742; these read SN and QRFE. ATP-binding positions include 747–748, 784–788, and 863–867; these read GM, TKFLS, and TLYKL. Residues 861 to 863 and Ser-897 contribute to the D-glucose 6-phosphate site; that span reads DGT.

This sequence belongs to the hexokinase family. Monomer. Interacts with TIGAR; the interaction increases hexokinase activity in a hypoxia- and HIF1A-dependent manner.

The protein localises to the mitochondrion outer membrane. The protein resides in the cytoplasm. Its subcellular location is the cytosol. The enzyme catalyses a D-hexose + ATP = a D-hexose 6-phosphate + ADP + H(+). It carries out the reaction D-fructose + ATP = D-fructose 6-phosphate + ADP + H(+). The catalysed reaction is D-glucose + ATP = D-glucose 6-phosphate + ADP + H(+). The protein operates within carbohydrate metabolism; hexose metabolism. It participates in carbohydrate degradation; glycolysis; D-glyceraldehyde 3-phosphate and glycerone phosphate from D-glucose: step 1/4. Hexokinase activity is specifically inhibited by 2,6-disubstituted glucosamines. Functionally, catalyzes the phosphorylation of hexose, such as D-glucose and D-fructose, to hexose 6-phosphate (D-glucose 6-phosphate and D-fructose 6-phosphate, respectively). Mediates the initial step of glycolysis by catalyzing phosphorylation of D-glucose to D-glucose 6-phosphate. Plays a key role in maintaining the integrity of the outer mitochondrial membrane by preventing the release of apoptogenic molecules from the intermembrane space and subsequent apoptosis. The protein is Hexokinase-2 of Equus zebra (Mountain zebra).